The chain runs to 286 residues: Translocon-associated protein subunit alpha (286 aa).

A signal peptide spans 1 to 23 (MRVLPRLLLLLLLAFPAAVLLRG). Residues 24-207 (GPGGSLVAAQ…EREDGLDGET (184 aa)) lie on the Lumenal side of the membrane. Acidic residues predominate over residues 37-75 (EDEETVEDSIIEDEDDEAEVEEDEPTDLAEDKEEEDVSG). The segment at 37–83 (EDEETVEDSIIEDEDDEAEVEEDEPTDLAEDKEEEDVSGEPEASPSA) is disordered. N-linked (GlcNAc...) asparagine glycans are attached at residues asparagine 136 and asparagine 191. A helical membrane pass occupies residues 208–228 (IFMYMFLAGLGLLVVVGLHQL). Residues 229-286 (LESRKRKRPIQKVEMGTSSQNDVDMSWIPQETLNQINKASPRRLPRKRAQKRSVGSDE) are Cytoplasmic-facing. Serine 247 is subject to Phosphoserine. Threonine 260 is modified (phosphothreonine). Residues 261 to 286 (LNQINKASPRRLPRKRAQKRSVGSDE) form a disordered region. Serine 268 bears the Phosphoserine mark. The span at 268–279 (SPRRLPRKRAQK) shows a compositional bias: basic residues.

The protein belongs to the TRAP-alpha family. As to quaternary structure, heterotetramer of TRAP-alpha, TRAP-beta, TRAP-delta and TRAP-gamma. Interacts with palmitoylated calnexin (CALX), the interaction is required for efficient folding of glycosylated proteins. In terms of processing, phosphorylated in its cytoplasmic tail.

It is found in the endoplasmic reticulum membrane. Functionally, TRAP proteins are part of a complex whose function is to bind calcium to the ER membrane and thereby regulate the retention of ER resident proteins. May be involved in the recycling of the translocation apparatus after completion of the translocation process or may function as a membrane-bound chaperone facilitating folding of translocated proteins. The protein is Translocon-associated protein subunit alpha (SSR1) of Canis lupus familiaris (Dog).